A 471-amino-acid polypeptide reads, in one-letter code: dTDP-4-dehydro-6-deoxy-alpha-D-glucopyranose 2,3-dehydratase (471 aa).

DTDP-4-dehydro-6-deoxy-alpha-D-glucose is bound by residues Trp-67, 155–159 (TRSNY), Ser-193, Asn-238, Trp-288, Arg-351, 367–369 (QCT), 372–373 (NY), and 405–408 (EGGR).

It belongs to the hexose 2,3-dehydratase family. As to quaternary structure, homodimer.

The enzyme catalyses dTDP-4-dehydro-6-deoxy-alpha-D-glucose = dTDP-3,4-didehydro-2,6-dideoxy-alpha-D-glucose + H2O. The protein operates within antibiotic biosynthesis. Involved in the biosynthesis of the 2,3,6-trideoxysugar L-epivancosamine, the terminal sugar added to the aglycone scaffold of chloroeremomycin, a member of the glycopeptide antibiotics vancomycin family. Catalyzes the removal of the hydroxyl group at position C-2 of the hexose ring of dTDP-4-dehydro-6-deoxy-alpha-D-glucopyranose, and the oxidation of the hydroxyl group at position C-3 to form a carbonyl functionality. The product of the reaction, dTDP-2,6-dideoxy-D-glycero-hex-2-enos-4-ulose, is a highly unstable diketosugar, which spontaneously forms dTDP-3,4-didehydro-2,6-dideoxy-alpha-D-glucose. In Amycolatopsis orientalis (Nocardia orientalis), this protein is dTDP-4-dehydro-6-deoxy-alpha-D-glucopyranose 2,3-dehydratase.